The primary structure comprises 128 residues: EPIDERMAL PATTERNING FACTOR-like protein 2 (128 aa).

A signal peptide spans 1 to 28 (MVWSSNMSSFLLILLILNSTHFSLMANG). 3 cysteine pairs are disulfide-bonded: cysteine 60–cysteine 119, cysteine 65–cysteine 71, and cysteine 68–cysteine 121. Over residues 79 to 90 (NPQTKLHSPLTT) the composition is skewed to polar residues. Residues 79 to 100 (NPQTKLHSPLTTSSSSSSETIH) form a disordered region.

It belongs to the plant cysteine rich small secretory peptide family. Epidermal patterning factor subfamily.

It localises to the secreted. In terms of biological role, controls stomatal patterning. This is EPIDERMAL PATTERNING FACTOR-like protein 2 from Arabidopsis thaliana (Mouse-ear cress).